The following is a 416-amino-acid chain: 2-amino-3-ketobutyrate coenzyme A ligase, mitochondrial (416 aa).

Residues 1-18 constitute a mitochondrion transit peptide; the sequence is MWASFMWHGALSPGRRAH. At K42 the chain carries N6-acetyllysine; alternate. K42 is subject to N6-succinyllysine; alternate. 131–132 serves as a coordination point for pyridoxal 5'-phosphate; the sequence is CF. Residue H156 coordinates substrate. K184 carries the N6-acetyllysine; alternate modification. K184 is subject to N6-succinyllysine; alternate. Pyridoxal 5'-phosphate contacts are provided by residues S203, 259–262, and 292–293; these read TLGK and SN. K262 carries the N6-(pyridoxal phosphate)lysine modification. K323 and K365 each carry N6-succinyllysine. N6-acetyllysine; alternate is present on K380. An N6-succinyllysine; alternate modification is found at K380. A substrate-binding site is contributed by R386.

This sequence belongs to the class-II pyridoxal-phosphate-dependent aminotransferase family. Pyridoxal 5'-phosphate serves as cofactor.

The protein localises to the mitochondrion. It localises to the nucleus. It carries out the reaction glycine + acetyl-CoA = (2S)-2-amino-3-oxobutanoate + CoA. It participates in amino-acid degradation; L-threonine degradation via oxydo-reductase pathway; glycine from L-threonine: step 2/2. Its function is as follows. Pyridoxal phosphate (PLP) dependent enzyme, which catalyzes the cleavage of 2-amino-3-oxobutanoate to glycine and acetyl-CoA. Catalyzes the second reaction step on the main metabolic degradation pathway for L-threonine. This Mus musculus (Mouse) protein is 2-amino-3-ketobutyrate coenzyme A ligase, mitochondrial (Gcat).